The sequence spans 580 residues: Transcription factor coe2-B (580 aa).

Residues 60–63 (RKSN) form an interaction with DNA region. Residues 148 to 167 (CRVLLTHEVMCSRCCEKKSC) form a C5-type zinc finger. Interaction with DNA regions lie at residues 194–201 (NCLKTAGN) and 233–236 (NNSK). The 83-residue stretch at 259 to 341 (PCIKAISPSE…CKGAPGRFIY (83 aa)) folds into the IPT/TIG domain. Residues 455-492 (IRNTSSISPRGYSSSSTPQQSNYSTPSNSMNGYSNVPM) form a disordered region. Residues 459–481 (SSISPRGYSSSSTPQQSNYSTPS) show a composition bias toward low complexity. The span at 482–492 (NSMNGYSNVPM) shows a compositional bias: polar residues.

It belongs to the COE family. In embryos, expressed in precursors of primary neurons. In adults, expressed at high levels in the brain, and at low levels in the somatic muscles, testis, and possibly the spleen.

It localises to the nucleus. In terms of biological role, may play a pivotal role in the transcriptional cascade that specifies primary neurons in embryos. Stabilizes the higher neural potential of selected progenitor cells that express neurog2/X-ngnr-1 by maintaining Delta-Notch signaling. Thus ensures the transition between neural competence and irreversible commitment to a neural fate. Also promotes neuronal differentiation by activating neurod1 expression, directly or indirectly. In Xenopus laevis (African clawed frog), this protein is Transcription factor coe2-B.